Here is a 695-residue protein sequence, read N- to C-terminus: G-patch and R3H domain-containing protein C30B4.02c (695 aa).

6 disordered regions span residues 168–200, 213–242, 257–317, 332–351, 388–448, and 475–517; these read SDKE…NDDS, DIAN…EFDI, FADL…FDEG, GNTD…DEDE, DSED…VAAR, and DKSK…DSDN. Residues 182–198 show a composition bias toward basic and acidic residues; it reads CYKEQESEKELYSKDND. 3 stretches are compositionally biased toward acidic residues: residues 262-286, 307-317, and 337-351; these read VLEE…EEEE, EDSESLEFDEG, and LAED…DEDE. Residues 421 to 434 show a composition bias toward basic residues; it reads KKDRKLPKKMRKAQ. The R3H domain maps to 525 to 587; it reads KIFINDVYQR…KRYTMLSKTH (63 aa). The region spanning 652–695 is the G-patch domain; it reads KENPGRRLLEKLGWYAGKGLGHPENEGSKDSLRAIVKVSRSGLG.

Its subcellular location is the cytoplasm. This chain is G-patch and R3H domain-containing protein C30B4.02c, found in Schizosaccharomyces pombe (strain 972 / ATCC 24843) (Fission yeast).